The primary structure comprises 326 residues: Beta-ketoacyl-[acyl-carrier-protein] synthase III (326 aa).

Catalysis depends on residues cysteine 112 and histidine 251. Residues 252–256 (QANSR) are ACP-binding. Residue asparagine 281 is part of the active site.

The protein belongs to the thiolase-like superfamily. FabH family. Homodimer.

The protein localises to the cytoplasm. It catalyses the reaction malonyl-[ACP] + acetyl-CoA + H(+) = 3-oxobutanoyl-[ACP] + CO2 + CoA. The protein operates within lipid metabolism; fatty acid biosynthesis. Catalyzes the condensation reaction of fatty acid synthesis by the addition to an acyl acceptor of two carbons from malonyl-ACP. Catalyzes the first condensation reaction which initiates fatty acid synthesis and may therefore play a role in governing the total rate of fatty acid production. Possesses both acetoacetyl-ACP synthase and acetyl transacylase activities. Its substrate specificity determines the biosynthesis of branched-chain and/or straight-chain of fatty acids. In Clostridium botulinum (strain Kyoto / Type A2), this protein is Beta-ketoacyl-[acyl-carrier-protein] synthase III.